The following is a 317-amino-acid chain: L-lactate dehydrogenase (317 aa).

NAD(+) contacts are provided by residues Val17, Asp38, Lys43, Tyr69, and 83-84 (GA). Substrate contacts are provided by Gln86 and Arg92. Residues Ser105, 122 to 124 (ATN), and Ser147 contribute to the NAD(+) site. 124–127 (NPVD) serves as a coordination point for substrate. 152–155 (DTAR) is a substrate binding site. Residues Arg157 and His172 each coordinate beta-D-fructose 1,6-bisphosphate. The active-site Proton acceptor is His179. A Phosphotyrosine modification is found at Tyr224. Thr233 is a substrate binding site.

Belongs to the LDH/MDH superfamily. LDH family. Homotetramer.

It is found in the cytoplasm. It carries out the reaction (S)-lactate + NAD(+) = pyruvate + NADH + H(+). Its pathway is fermentation; pyruvate fermentation to lactate; (S)-lactate from pyruvate: step 1/1. Allosterically activated by fructose 1,6-bisphosphate (FBP). Catalyzes the conversion of lactate to pyruvate. The sequence is that of L-lactate dehydrogenase from Geobacillus kaustophilus (strain HTA426).